The sequence spans 93 residues: Early nodulin-12A (93 aa).

Positions 1–24 (MASFLLSILVFFLSALVLVPQGFA) are cleaved as a signal peptide. Positions 30 to 93 (PAYRPPQTEP…HPPSEDNIHF (64 aa)) are disordered. A run of 10 repeats spans residues 34–38 (PPQTE), 39–43 (PPVHK), 44–48 (PPHKE), 49–53 (PPVHK), 54–58 (PPHKD), 59–63 (PPVNK), 64–68 (PPQKE), 69–73 (PPVHK), 74–78 (PPRKE), and 79–83 (PPTHR). Positions 34–83 (PPQTEPPVHKPPHKEPPVHKPPHKDPPVNKPPQKEPPVHKPPRKEPPTHR) are 10 X 5 AA tandem repeats of P-P-[HQVRT]-[HKNT]-[DEKR]. The segment covering 46 to 93 (HKEPPVHKPPHKDPPVNKPPQKEPPVHKPPRKEPPTHRHPPSEDNIHF) has biased composition (basic and acidic residues).

Belongs to the plant proline-rich protein superfamily. ENOD12 family. In terms of tissue distribution, more abundant in the young nodules than the mature nodules.

The protein resides in the secreted. It localises to the cell wall. In terms of biological role, involved in the infection process during the plant-rhizobium interaction. The polypeptide is Early nodulin-12A (ENOD12A) (Medicago sativa (Alfalfa)).